Here is a 219-residue protein sequence, read N- to C-terminus: GPI ethanolamine phosphate transferase, stabilizing subunit (219 aa).

A run of 6 helical transmembrane segments spans residues 11 to 31 (YTNL…SFFV), 42 to 62 (TWLC…YLVV), 86 to 106 (CFLM…APLI), 113 to 133 (FLFA…LLGP), 155 to 175 (LQIT…PIPL), and 189 to 209 (TLGA…WIYW).

Belongs to the PIGF family. Part of the ethanolamine phosphate transferase 3 complex composed by PIGO and PIGF. Part of the ethanolamine phosphate transferase 2 complex with PIGG. PIGF is required to stabilize PIGG and PIGO.

It localises to the endoplasmic reticulum membrane. It functions in the pathway glycolipid biosynthesis; glycosylphosphatidylinositol-anchor biosynthesis. Stabilizing subunit of the ethanolamine phosphate transferase 3 and ethanolamine phosphate transferase 2 complexes that sequentially transfer an ethanolamine phosphate (EtNP) from a phosphatidylethanolamine (PE) to the 6-OH position of the third alpha-1,2-linked mannose and the second alpha-1,6-linked mannose of the alpha-D-Man-(1-&gt;2)-alpha-D-Man-(1-&gt;6)-2-PEtn-alpha-D-Man-(1-&gt;4)-alpha-D-GlcN-(1-&gt;6)-(1-radyl,2-acyl-sn-glycero-3-phospho)-2-acyl-inositol (also termed H6) intermediate to generate a 6-PEtn-alpha-D-Man-(1-&gt;2)-6-PEtn-alpha-D-Man-(1-&gt;6)-2-PEtn-alpha-D-Man-(1-&gt;4)-alpha-D-GlcN-(1-&gt;6)-(1-radyl,2-acyl-sn-glycero-3-phospho)-2-acyl-inositol (also termed H8). Participates in the tenth and eleventh steps of the glycosylphosphatidylinositol-anchor biosynthesis, in association with PIGO and PIGG, respectively. In Mus musculus (Mouse), this protein is GPI ethanolamine phosphate transferase, stabilizing subunit.